Consider the following 684-residue polypeptide: Sec1 family domain-containing protein 2 (684 aa).

Belongs to the STXBP/unc-18/SEC1 family.

May be involved in protein transport. This Homo sapiens (Human) protein is Sec1 family domain-containing protein 2 (SCFD2).